Reading from the N-terminus, the 382-residue chain is Galactokinase (382 aa).

A substrate-binding site is contributed by 34 to 37 (EHTD). 124–130 (GAGLSSS) contacts ATP. Mg(2+) contacts are provided by Ser130 and Glu162. Asp174 serves as the catalytic Proton acceptor. Position 223 (Tyr223) interacts with substrate.

Belongs to the GHMP kinase family. GalK subfamily.

It is found in the cytoplasm. The enzyme catalyses alpha-D-galactose + ATP = alpha-D-galactose 1-phosphate + ADP + H(+). It functions in the pathway carbohydrate metabolism; galactose metabolism. Functionally, catalyzes the transfer of the gamma-phosphate of ATP to D-galactose to form alpha-D-galactose-1-phosphate (Gal-1-P). In Shigella dysenteriae serotype 1 (strain Sd197), this protein is Galactokinase.